Consider the following 444-residue polypeptide: MPSHFDTLQLHAGQEKTADAHNPRAVPIYATTSYVFNDSKHGAQLFGLETPGYIYSRIMNPTLDVLEKRLAALEGGIAALATSSGQAAQTLAVTGLAHTGDNIVSTSFLYGGTYNQFKVAFKRLGIEARFVDGDKPEDFEKLFDEKTKALYLESIGNPKYNVPDFEKIVAVAHKHGIPVVVDNTFGAGGFFCQPIKYGADIVTHSATKWIGGHGVTVGGVIIDSGKFPWKDYPEKFPQFSQPSEGYHGLIFNDAFGPAAFIGHVRTELLRDLGPVLSPFAGFLLLQGLETLSLRGERHGSNALKLAQYLESSPYVSWVSYPGLPSHSHHENAKKYLENGFGGVLSFGVKDLPNASEESDPFKASGAQVVDNLKLASNLANVGDSKTLVIAPYFTTHQQLTDEEKLASGVTKDLIRVSVGTEFIDDIIADFEASFATVFNGQKPE.

Residue lysine 208 is modified to N6-(pyridoxal phosphate)lysine.

The protein belongs to the trans-sulfuration enzymes family. Homotetramer. The cofactor is pyridoxal 5'-phosphate.

The protein localises to the cytoplasm. The catalysed reaction is O-acetyl-L-homoserine + methanethiol = L-methionine + acetate + H(+). It carries out the reaction O-acetyl-L-homoserine + hydrogen sulfide = L-homocysteine + acetate. The enzyme catalyses O-acetyl-L-serine + hydrogen sulfide = L-cysteine + acetate. It functions in the pathway amino-acid biosynthesis; L-methionine biosynthesis via de novo pathway; L-homocysteine from O-acetyl-L-homoserine. It participates in amino-acid biosynthesis; L-cysteine biosynthesis; L-cysteine from L-serine: step 2/2. Functionally, catalyzes the conversion of O-acetyl-L-homoserine (OAH) into homocysteine in the methionine biosynthesis pathway. Also catalyzes the conversion of O-acetylserine (OAS) into cysteine, the last step in the cysteine biosynthesis pathway. The sequence is that of Homocysteine/cysteine synthase (MET17) from Kluyveromyces lactis (strain ATCC 8585 / CBS 2359 / DSM 70799 / NBRC 1267 / NRRL Y-1140 / WM37) (Yeast).